We begin with the raw amino-acid sequence, 212 residues long: Ribonuclease HII (212 aa).

The region spanning 1-205 (MTICGVDEAG…VQDILDRASQ (205 aa)) is the RNase H type-2 domain. Residues aspartate 7, glutamate 8, and aspartate 100 each contribute to the a divalent metal cation site.

Belongs to the RNase HII family. Mn(2+) is required as a cofactor. It depends on Mg(2+) as a cofactor.

The protein localises to the cytoplasm. The enzyme catalyses Endonucleolytic cleavage to 5'-phosphomonoester.. Its function is as follows. Endonuclease that specifically degrades the RNA of RNA-DNA hybrids. The protein is Ribonuclease HII of Methanocorpusculum labreanum (strain ATCC 43576 / DSM 4855 / Z).